We begin with the raw amino-acid sequence, 440 residues long: Thymidine phosphorylase (440 aa).

Belongs to the thymidine/pyrimidine-nucleoside phosphorylase family. In terms of assembly, homodimer.

It carries out the reaction thymidine + phosphate = 2-deoxy-alpha-D-ribose 1-phosphate + thymine. The protein operates within pyrimidine metabolism; dTMP biosynthesis via salvage pathway; dTMP from thymine: step 1/2. In terms of biological role, the enzymes which catalyze the reversible phosphorolysis of pyrimidine nucleosides are involved in the degradation of these compounds and in their utilization as carbon and energy sources, or in the rescue of pyrimidine bases for nucleotide synthesis. This is Thymidine phosphorylase from Proteus mirabilis (strain HI4320).